The following is a 447-amino-acid chain: Lipid II isoglutaminyl synthase (glutamine-hydrolyzing) subunit MurT (447 aa).

Positions 205, 208, 227, and 230 each coordinate Zn(2+). Asp-355 is a catalytic residue.

Belongs to the MurCDEF family. MurT subfamily. In terms of assembly, forms a heterodimer with GatD.

It carries out the reaction beta-D-GlcNAc-(1-&gt;4)-Mur2Ac(oyl-L-Ala-gamma-D-Glu-L-Lys-D-Ala-D-Ala)-di-trans,octa-cis-undecaprenyl diphosphate + L-glutamine + ATP + H2O = beta-D-GlcNAc-(1-&gt;4)-Mur2Ac(oyl-L-Ala-D-isoglutaminyl-L-Lys-D-Ala-D-Ala)-di-trans,octa-cis-undecaprenyl diphosphate + L-glutamate + ADP + phosphate + H(+). The catalysed reaction is beta-D-GlcNAc-(1-&gt;4)-Mur2Ac(oyl-L-Ala-gamma-D-Glu-L-Lys-D-Ala-D-Ala)-di-trans,octa-cis-undecaprenyl diphosphate + ATP = beta-D-GlcNAc-(1-&gt;4)-Mur2Ac(oyl-L-Ala-gamma-D-O-P-Glu-L-Lys-D-Ala-D-Ala)-di-trans,octa-cis-undecaprenyl diphosphate + ADP. It catalyses the reaction beta-D-GlcNAc-(1-&gt;4)-Mur2Ac(oyl-L-Ala-gamma-D-O-P-Glu-L-Lys-D-Ala-D-Ala)-di-trans,octa-cis-undecaprenyl diphosphate + NH4(+) = beta-D-GlcNAc-(1-&gt;4)-Mur2Ac(oyl-L-Ala-D-isoglutaminyl-L-Lys-D-Ala-D-Ala)-di-trans,octa-cis-undecaprenyl diphosphate + phosphate + H(+). Its pathway is cell wall biogenesis; peptidoglycan biosynthesis. Its function is as follows. The lipid II isoglutaminyl synthase complex catalyzes the formation of alpha-D-isoglutamine in the cell wall lipid II stem peptide. The MurT subunit catalyzes the ATP-dependent amidation of D-glutamate residue of lipid II, converting it to an isoglutamine residue. This is Lipid II isoglutaminyl synthase (glutamine-hydrolyzing) subunit MurT from Streptococcus pneumoniae (strain ATCC BAA-255 / R6).